A 736-amino-acid polypeptide reads, in one-letter code: Prolyl 3-hydroxylase 3 (736 aa).

Positions 1–20 (MLRLLRPLLLLLLLPPPGSP) are cleaved as a signal peptide. 3 TPR repeats span residues 37-70 (PDLL…QAAL), 154-187 (REPY…NPMH), and 216-249 (HWAA…SLAQ). The tract at residues 253-275 (CRADCEGPEEQQGAEEEEDGAAS) is disordered. Acidic residues predominate over residues 258–272 (EGPEEQQGAEEEEDG). The stretch at 316–349 (PNQLRRLHEAHAQVGNLSQAIENVLSVLLFYPED) is one TPR 4 repeat. N-linked (GlcNAc...) asparagine glycosylation is found at asparagine 331 and asparagine 462. Residues 561 to 675 (THLVCRSAIE…RCALALWHTW (115 aa)) form the Fe2OG dioxygenase domain. 3 residues coordinate Fe cation: histidine 584, aspartate 586, and histidine 656. Arginine 666 is an active-site residue. Positions 681 to 709 (EQEWIEAKELLQESQEEEEEEEEEMPSKD) form a coiled coil. The tract at residues 689 to 736 (ELLQESQEEEEEEEEEMPSKDPSPEPPSRRHQRVQDKTGRAPRVREEL) is disordered. A compositionally biased stretch (acidic residues) spans 694–704 (SQEEEEEEEEE). Residues 721–736 (RVQDKTGRAPRVREEL) are compositionally biased toward basic and acidic residues. The short motif at 733 to 736 (REEL) is the Prevents secretion from ER element.

It belongs to the leprecan family. In terms of assembly, identified in a complex with PLOD1 and P3H4. It depends on Fe cation as a cofactor. The cofactor is L-ascorbate. Detected in fetal cartilage (at protein level). Weak expression in heart, lung, ovary and skeletal muscle.

Its subcellular location is the endoplasmic reticulum. The enzyme catalyses L-prolyl-[collagen] + 2-oxoglutarate + O2 = trans-3-hydroxy-L-prolyl-[collagen] + succinate + CO2. Functionally, part of a complex composed of PLOD1, P3H3 and P3H4 that catalyzes hydroxylation of lysine residues in collagen alpha chains and is required for normal assembly and cross-linkling of collagen fibrils. Required for normal hydroxylation of lysine residues in type I collagen chains in skin, bone, tendon, aorta and cornea. Required for normal skin stability via its role in hydroxylation of lysine residues in collagen alpha chains and in collagen fibril assembly. Apparently not required for normal prolyl 3-hydroxylation on collagen chains, possibly because it functions redundantly with other prolyl 3-hydroxylases. The sequence is that of Prolyl 3-hydroxylase 3 from Homo sapiens (Human).